Here is a 126-residue protein sequence, read N- to C-terminus: Protein ApaG (126 aa).

One can recognise an ApaG domain in the interval 2-126; sequence SDSRYKVDVS…FRLAVPGSLH (125 aa).

The protein is Protein ApaG of Pseudomonas syringae pv. tomato (strain ATCC BAA-871 / DC3000).